A 335-amino-acid chain; its full sequence is Biotin synthase (335 aa).

The Radical SAM core domain maps to 46 to 274 (YKVQLASLFS…KSKIRLSAGR (229 aa)). 3 residues coordinate [4Fe-4S] cluster: Cys61, Cys65, and Cys68. 4 residues coordinate [2Fe-2S] cluster: Cys105, Cys137, Cys197, and Arg269.

Belongs to the radical SAM superfamily. Biotin synthase family. In terms of assembly, homodimer. It depends on [4Fe-4S] cluster as a cofactor. [2Fe-2S] cluster serves as cofactor.

The enzyme catalyses (4R,5S)-dethiobiotin + (sulfur carrier)-SH + 2 reduced [2Fe-2S]-[ferredoxin] + 2 S-adenosyl-L-methionine = (sulfur carrier)-H + biotin + 2 5'-deoxyadenosine + 2 L-methionine + 2 oxidized [2Fe-2S]-[ferredoxin]. Its pathway is cofactor biosynthesis; biotin biosynthesis; biotin from 7,8-diaminononanoate: step 2/2. Catalyzes the conversion of dethiobiotin (DTB) to biotin by the insertion of a sulfur atom into dethiobiotin via a radical-based mechanism. The sequence is that of Biotin synthase from Prochlorococcus marinus (strain MIT 9515).